Reading from the N-terminus, the 406-residue chain is Probable tRNA pseudouridine synthase D (406 aa).

The active-site Nucleophile is the Asp77. One can recognise a TRUD domain in the interval 150–371 (GFPNYFGIQR…PGGRRELLIK (222 aa)).

Belongs to the pseudouridine synthase TruD family.

It catalyses the reaction uridine(13) in tRNA = pseudouridine(13) in tRNA. In terms of biological role, could be responsible for synthesis of pseudouridine from uracil-13 in transfer RNAs. The chain is Probable tRNA pseudouridine synthase D from Pyrococcus abyssi (strain GE5 / Orsay).